The primary structure comprises 156 residues: MPRKGPVAKRDVLPDPIHNSKLVTKLINKIMIDGKRGTAQKILYNAFDLVQERSGRDAMEVFEEAINNIMPVLEVKARRVGGSNYQVPVEVRAERRTTLGLRWLVNYSRLRGEKTMEERLANEILDAANNTGGAVKKREDTHKMAEANKAFAHYRW.

It belongs to the universal ribosomal protein uS7 family. As to quaternary structure, part of the 30S ribosomal subunit. Contacts proteins S9 and S11.

Functionally, one of the primary rRNA binding proteins, it binds directly to 16S rRNA where it nucleates assembly of the head domain of the 30S subunit. Is located at the subunit interface close to the decoding center, probably blocks exit of the E-site tRNA. The chain is Small ribosomal subunit protein uS7 from Macrococcus caseolyticus (strain JCSC5402) (Macrococcoides caseolyticum).